The following is a 907-amino-acid chain: MLGTIVKKIIGTKNDRELKRMAKLVDAINSHAEAMAQLTDGDLQHKTEAFRQAFKDGKTLDELLPEAFAVVREASTRVMGMRHFDVQMMGGISLHEGRISEMRTGEGKTLTATLPAYLNALSGEGVHVVTVNDYLAERDANWMRPLYEFLGLSVGIILSQQPTEHKRAAYAADITYGTNNEYGFDYLRDNMAFRLEDRVQRGLNYAIVDEVDSILIDEARTPLIISGPAADSSELYQAVNLLMPQLQKQEEEGEGDYFIDEKQRQVELTEAGHQKIEALLVNNQLLEQGESLYAAHNLALLHHVHAALKAHALFHIDRDYIVQDGQIVIVDEHTGRTMPGRRWSEGIHQAIEAKEGLNIQQENQTLASTTFQNYFRLYNKLSGMTGTADTEALEFRQIYGMDVVVVPTNKPMVRVDANDLVYLSLQEKFDAIVKEVTEAVAKGAPVLVGTATIEASEYLSKRLKQDKVHHEVLNAKFHQREAQIIAQAGRPGAVTIATNMAGRGTDIMLGGNPEEQIKHMETPSESEAEKIRAEWQANHDTVMKAGGLHIIGTERHESRRIDNQLRGRAGRQGDPGYTRFFLSMEDDLMRIFASDKIRNLMRSLGLENGEAIEHRWVTRAIENAQRKVEGRNFDIRKNLLEYDNVANDQRQVIYGQRDQILEAADLVNSVKGIRRDVITELVHDYMAPGSVEDQWDIPGLEKTLEAEFQCHAPVGQWLNEDNQLHIEGLIDKLVESMDEDYQRKEAEIGTEDLRKIEKHLMLQILDRHWKEHLANMDHLRQGIHLRGYAQKNPKQEYKKEAFELFQGLLNQIQHELIRVLHSLQVRRDDEVERLEQQREEEAREQAEKMKMQTVAEPGTDGSAQPQPSQQQGEQPKTMVRNGRKVGRNEPCPCGSGKKYKQCHGKIE.

ATP contacts are provided by residues Gln87, Gly105 to Thr109, and Asp506. A compositionally biased stretch (basic and acidic residues) spans Leu834–Lys850. The disordered stretch occupies residues Leu834–Glu907. Positions Gln864 to Pro875 are enriched in low complexity. The Zn(2+) site is built by Cys891, Cys893, Cys902, and His903. A compositionally biased stretch (basic residues) spans Lys897–Glu907.

Belongs to the SecA family. In terms of assembly, monomer and homodimer. Part of the essential Sec protein translocation apparatus which comprises SecA, SecYEG and auxiliary proteins SecDF-YajC and YidC. Requires Zn(2+) as cofactor.

It is found in the cell inner membrane. It localises to the cytoplasm. It catalyses the reaction ATP + H2O + cellular proteinSide 1 = ADP + phosphate + cellular proteinSide 2.. Its function is as follows. Part of the Sec protein translocase complex. Interacts with the SecYEG preprotein conducting channel. Has a central role in coupling the hydrolysis of ATP to the transfer of proteins into and across the cell membrane, serving both as a receptor for the preprotein-SecB complex and as an ATP-driven molecular motor driving the stepwise translocation of polypeptide chains across the membrane. This is Protein translocase subunit SecA from Alcanivorax borkumensis (strain ATCC 700651 / DSM 11573 / NCIMB 13689 / SK2).